The sequence spans 287 residues: Nucleotide-binding protein Hhal_2130 (287 aa).

An ATP-binding site is contributed by 11–18 (GLSGSGKS). GTP is bound at residue 63–66 (DARN).

It belongs to the RapZ-like family.

In terms of biological role, displays ATPase and GTPase activities. The polypeptide is Nucleotide-binding protein Hhal_2130 (Halorhodospira halophila (strain DSM 244 / SL1) (Ectothiorhodospira halophila (strain DSM 244 / SL1))).